Consider the following 405-residue polypeptide: Tryptophan synthase beta chain (405 aa).

Lys96 is subject to N6-(pyridoxal phosphate)lysine.

This sequence belongs to the TrpB family. In terms of assembly, tetramer of two alpha and two beta chains. The cofactor is pyridoxal 5'-phosphate.

The enzyme catalyses (1S,2R)-1-C-(indol-3-yl)glycerol 3-phosphate + L-serine = D-glyceraldehyde 3-phosphate + L-tryptophan + H2O. It participates in amino-acid biosynthesis; L-tryptophan biosynthesis; L-tryptophan from chorismate: step 5/5. The beta subunit is responsible for the synthesis of L-tryptophan from indole and L-serine. The protein is Tryptophan synthase beta chain of Clostridium botulinum (strain Eklund 17B / Type B).